A 789-amino-acid polypeptide reads, in one-letter code: MNIMNTEQSQNTIVSRIKAFEGQTNTEIPGLPKKPEIIPRTIPPKPAVSSGKPLVAPKPAANRASGEWDTWAENRLKVTSREGLTPYSSPQEAGITPVTKPELPKKPTPGLTRSVNHETSGGRPMAESPDTGKKIPTPAPRPLLPKKSASTDAPPYPSIPPKLVSAPPRLSVASQAKAFRSLGEGLPSNPPVPAPQSKALGDIDLISFDDDVLPTSGSPAEEPTGSETVLDPFQLPTKTEATKERAVQPAPTRKPTVIRIPAKPGKCLHEEPQSPPPLPAEKPVGNTHSAVSGRPSHSDRTRNPELEQASESGGLVQGPPRLPPRPVHGKVIPVWRPPPKGAPERPPPPKLPASKSSNKNLPFNRSSSDMDLQKKQSHFVSGLSKAKSQIFKNQDPVLPPRPKPGHPLYRKYMLSVPHGIANEDIVSRNPTELSCKRGDVLVILKQAENNYLECQRGEGTGRVHPSQMKIVTPLDERPRGRPNDSGHSQKPVDSGAPHAVALHDFPAEQADDLSLTSGEIVYLLEKIDAEWYRGKCRNQTGVFPANYVKVIVDIPEGRSGKRESFSSHCAKGPRCVARFEYIGDQKDELSFSEGEVIILTEYVNEEWGRGEIRDRSGIFPLNFVELVGDHPTSGANILSTKVPPKTKNEDPGSNSQDSSPPGEWCKALHSFTAETSEDLPFKRGDRILILERLDSDWYRGRLHDREGIFPAVFVQPCPAEAKGVASAIPKGRKVKALYDFLGENEDELSFKAGDVITELEPIDDAWMRGELMGRAGMFPKNYVQFLQVS.

Disordered stretches follow at residues 24-170 (TNTE…PPRL), 209-404 (DDDV…RPKP), and 472-497 (TPLD…SGAP). S65 carries the post-translational modification Phosphoserine. The span at 296-305 (SHSDRTRNPE) shows a compositional bias: basic and acidic residues. Residues 335–351 (WRPPPKGAPERPPPPKL) are compositionally biased toward pro residues. The span at 352 to 361 (PASKSSNKNL) shows a compositional bias: low complexity. At S368 the chain carries Phosphoserine. SH3 domains lie at 414-476 (LSVP…PLDE), 494-553 (SGAP…VIVD), 570-629 (AKGP…LVGD), 660-719 (PPGE…PCPA), and 729-788 (PKGR…FLQV). Over residues 474-484 (LDERPRGRPND) the composition is skewed to basic and acidic residues. A disordered region spans residues 635 to 663 (ANILSTKVPPKTKNEDPGSNSQDSSPPGE).

As to quaternary structure, interacts with ADAM12. Isoform 2 (but not isoform 1) interacts with ADAM9, ADAM10, ADAM15 and ADAM17. Interacts with SH3GL1 SH3 domain. Interacts via SH3 3 and SH3 4 or SH3 4 and SH3 5 domains with SOS2. Probably forms a trimeric complex with SH3GL1 and SOS2. Interacts with SH3YL1. Expressed in hair follicles.

Its subcellular location is the cytoplasm. In terms of biological role, may play a role in regulating A disintegrin and metalloproteases (ADAMs) in the signaling of EGFR-ligand shedding. May be involved in suppression of Ras-induced cellular transformation and Ras-mediated activation of ELK1. Plays a role in the regulation of cell morphology and cytoskeletal organization. This chain is SH3 domain-containing protein 19 (Sh3d19), found in Mus musculus (Mouse).